The sequence spans 132 residues: Acid shock protein (132 aa).

The first 21 residues, 1-21, serve as a signal peptide directing secretion; it reads MKKVLALIVAATMGLSSVAFA. The propeptide occupies 22–69; the sequence is AETTAAATAAPAATSTTAAPAVEKAAPAKATHHKKHKATKQTTEQKAQ. The segment covering 30–50 has biased composition (low complexity); that stretch reads AAPAATSTTAAPAVEKAAPAK. The tract at residues 30–132 is disordered; it reads AAPAATSTTA…AKKSATAPAA (103 aa). Positions 51–60 are enriched in basic residues; it reads ATHHKKHKAT. Residues 61–99 are compositionally biased toward low complexity; sequence KQTTEQKAQAAKKAVKKAPAQKAQAAKKAVKKAPVQKAQ. A compositionally biased stretch (basic residues) spans 100-124; the sequence is AAKKHVKKAPAQKAQAAKKHHKTAK.

The protein belongs to the Asr family. In terms of processing, proteolytic processing gives rise to the active protein.

The protein resides in the periplasm. Required for growth and/or survival at acidic conditions. The protein is Acid shock protein of Yersinia enterocolitica serotype O:8 / biotype 1B (strain NCTC 13174 / 8081).